The chain runs to 398 residues: Nuclear egress protein 2 (398 aa).

Residues 1-359 (MEMNKVLHQD…GPSRPQSGPW (359 aa)) lie on the Perinuclear space side of the membrane. Disordered regions lie at residues 202–246 (ALTR…PPPP) and 306–334 (LEEHVSRRRGVSTHHRHPPSPPCTPSLER). Pro residues predominate over residues 215-224 (ASPPPPPPRH). Serine 216 carries the phosphoserine modification. Residues 225–240 (PSCSPTMVAAGGAAAG) show a composition bias toward low complexity. Residues 311 to 323 (SRRRGVSTHHRHP) show a composition bias toward basic residues. The chain crosses the membrane as a helical span at residues 360-382 (LPARFATLGPLVLALLLVLALLW). Residues 383–398 (RGHGQSSSPTRSAHRD) lie on the Nuclear side of the membrane.

This sequence belongs to the herpesviridae NEC2 protein family. In terms of assembly, forms a heterohexameric complex with NEC1. Interacts with host UBA7 and RNF170; this interaction promotes UBA7 proteasomal degradation. In terms of processing, phosphorylated. Phosphorylation by viral kinase UL97 at Ser-216 plays an important role for correct viral nuclear egress complex (NEC) localization.

Its subcellular location is the host nucleus inner membrane. In terms of biological role, plays an essential role in virion nuclear egress, the first step of virion release from infected cell. Within the host nucleus, NEC1 interacts with the newly formed capsid through the vertexes and directs it to the inner nuclear membrane by associating with NEC2. Induces the budding of the capsid at the inner nuclear membrane as well as its envelopment into the perinuclear space. There, the NEC1/NEC2 complex promotes the fusion of the enveloped capsid with the outer nuclear membrane and the subsequent release of the viral capsid into the cytoplasm where it will reach the secondary budding sites in the host Golgi or trans-Golgi network. Inhibits host ISGylation and subsequent innate antiviral response by targeting host UBA7 for proteasomal degradation. The sequence is that of Nuclear egress protein 2 from Homo sapiens (Human).